The chain runs to 449 residues: Chromosomal replication initiator protein DnaA (449 aa).

Residues 1 to 72 (MPNLEELWAY…VEGVYEFAQL (72 aa)) are domain I, interacts with DnaA modulators. Residues 72–109 (LEVDPVIMTKDELQPAPATDQRPAVEEDDQNLTFKAKT) are domain II. The tract at residues 110 to 326 (HLNPKYTFDH…GALVRVQAFS (217 aa)) is domain III, AAA+ region. The ATP site is built by glycine 154, glycine 156, lysine 157, and threonine 158. Residues 327-449 (TMKNEDITTS…ELRNILKNRG (123 aa)) are domain IV, binds dsDNA.

The protein belongs to the DnaA family. Oligomerizes as a right-handed, spiral filament on DNA at oriC.

The protein localises to the cytoplasm. Its function is as follows. Plays an essential role in the initiation and regulation of chromosomal replication. ATP-DnaA binds to the origin of replication (oriC) to initiate formation of the DNA replication initiation complex once per cell cycle. Binds the DnaA box (a 9 base pair repeat at the origin) and separates the double-stranded (ds)DNA. Forms a right-handed helical filament on oriC DNA; dsDNA binds to the exterior of the filament while single-stranded (ss)DNA is stabiized in the filament's interior. The ATP-DnaA-oriC complex binds and stabilizes one strand of the AT-rich DNA unwinding element (DUE), permitting loading of DNA polymerase. After initiation quickly degrades to an ADP-DnaA complex that is not apt for DNA replication. Binds acidic phospholipids. This is Chromosomal replication initiator protein DnaA from Lacticaseibacillus paracasei (strain ATCC 334 / BCRC 17002 / CCUG 31169 / CIP 107868 / KCTC 3260 / NRRL B-441) (Lactobacillus paracasei).